The primary structure comprises 245 residues: Sugar fermentation stimulation protein homolog (245 aa).

Belongs to the SfsA family.

This chain is Sugar fermentation stimulation protein homolog, found in Yersinia pestis bv. Antiqua (strain Nepal516).